We begin with the raw amino-acid sequence, 207 residues long: Imidazole glycerol phosphate synthase subunit HisH (207 aa).

The 206-residue stretch at 1-206 folds into the Glutamine amidotransferase type-1 domain; that stretch reads MMIVIDYDAG…KEYVYENTAR (206 aa). Residue C79 is the Nucleophile of the active site. Active-site residues include H181 and E183.

Heterodimer of HisH and HisF.

It localises to the cytoplasm. It carries out the reaction 5-[(5-phospho-1-deoxy-D-ribulos-1-ylimino)methylamino]-1-(5-phospho-beta-D-ribosyl)imidazole-4-carboxamide + L-glutamine = D-erythro-1-(imidazol-4-yl)glycerol 3-phosphate + 5-amino-1-(5-phospho-beta-D-ribosyl)imidazole-4-carboxamide + L-glutamate + H(+). It catalyses the reaction L-glutamine + H2O = L-glutamate + NH4(+). It participates in amino-acid biosynthesis; L-histidine biosynthesis; L-histidine from 5-phospho-alpha-D-ribose 1-diphosphate: step 5/9. In terms of biological role, IGPS catalyzes the conversion of PRFAR and glutamine to IGP, AICAR and glutamate. The HisH subunit catalyzes the hydrolysis of glutamine to glutamate and ammonia as part of the synthesis of IGP and AICAR. The resulting ammonia molecule is channeled to the active site of HisF. The protein is Imidazole glycerol phosphate synthase subunit HisH of Streptococcus sanguinis (strain SK36).